Reading from the N-terminus, the 298-residue chain is Protein OS-9 homolog (298 aa).

The first 25 residues, methionine 1 to alanine 25, serve as a signal peptide directing secretion. N-linked (GlcNAc...) asparagine glycosylation is present at asparagine 95. The MRH domain maps to aspartate 121–asparagine 246. A disulfide bridge links cysteine 123 with cysteine 136. Residues tryptophan 130, tryptophan 131, and glutamine 143 each coordinate a mannooligosaccharide derivative. N-linked (GlcNAc...) asparagine glycosylation is found at asparagine 171 and asparagine 197. 2 disulfides stabilise this stretch: cysteine 201-cysteine 232 and cysteine 216-cysteine 244. Residues aspartate 202, arginine 208, glutamate 228, and tyrosine 234 each coordinate a mannooligosaccharide derivative.

The protein belongs to the OS-9 family. As to quaternary structure, interacts with HRD3.

It is found in the endoplasmic reticulum. Lectin which functions in endoplasmic reticulum (ER) quality control and ER-associated degradation (ERAD). May bind terminally misfolded non-glycosylated proteins as well as improperly folded glycoproteins, retain them in the ER, and possibly transfer them to the ubiquitination machinery and promote their degradation. This chain is Protein OS-9 homolog, found in Oryza sativa subsp. japonica (Rice).